Here is a 199-residue protein sequence, read N- to C-terminus: Recombination protein RecR (199 aa).

Residues cysteine 57–cysteine 72 form a C4-type zinc finger. A Toprim domain is found at serine 81–proline 176.

This sequence belongs to the RecR family.

Its function is as follows. May play a role in DNA repair. It seems to be involved in an RecBC-independent recombinational process of DNA repair. It may act with RecF and RecO. The chain is Recombination protein RecR from Shewanella putrefaciens (strain CN-32 / ATCC BAA-453).